The primary structure comprises 466 residues: F-box/WD repeat-containing protein 15 (466 aa).

Residues 1-45 enclose the F-box domain; that stretch reads MAIHLPCLPMMKILSYLDAYSLLQAAQVNKDWNELASSDVLWRKL. WD repeat units lie at residues 101–143, 146–185, 187–228, 339–379, and 381–419; these read GYAC…ITWK, EQPA…ALAT, NLKS…LIST, LQCH…KTFQ, and CPEM…LRKC.

In terms of assembly, part of an SCF (SKP1-CUL1-F-box protein) E3 ubiquitin-protein ligase complex. Interacts with KAT7 and SKP1. Specifically expressed in oocytes from follicles of the medullary region of the ovary.

It is found in the cytoplasm. Its subcellular location is the cytosol. It localises to the endoplasmic reticulum. The protein resides in the nucleus. It participates in protein modification; protein ubiquitination. Substrate-recognition component of an SCF (SKP1-CUL1-F-box protein)-type E3 ubiquitin ligase complex. Promotes KAT7 ubiquitination and subsequent degradation in collaboration with MAP2K1 kinase, leading to reduced histone H3K14 acetylation and increased cell proliferation. This is F-box/WD repeat-containing protein 15 from Mus musculus (Mouse).